We begin with the raw amino-acid sequence, 718 residues long: Zinc finger protein 39 (718 aa).

The region spanning 59–130 (VSFEDVSVDF…EDVPKQSRAD (72 aa)) is the KRAB domain. The C2H2-type 1 zinc-finger motif lies at 298 to 320 (FECSICKKTFCTKCELMKHKKIH). A C2H2-type 2; degenerate zinc finger spans residues 353 to 375 (HRCKQCEKCFHQKNQQNVHERVP). 11 consecutive C2H2-type zinc fingers follow at residues 409–431 (YGCN…QKIH), 437–459 (YGCE…QRTH), 465–487 (YECK…HRTH), 493–515 (YECD…QKVH), 521–543 (YECE…QKTH), 549–571 (YECN…QGTH), 577–599 (YQCE…QRNH), 605–627 (YACE…QRSH), 633–655 (YSCE…QRTH), 661–683 (YECK…QVTH), and 689–711 (FECQ…QRIH).

As to expression, predominantly in the spermatocytes and spermatids of testes.

It is found in the nucleus. Its function is as follows. A putative DNA-binding regulatory protein associated with meiosis in spermatogenesis. This chain is Zinc finger protein 39 (Zfp39), found in Mus musculus (Mouse).